A 434-amino-acid chain; its full sequence is Septin-7 (434 aa).

Tyr-27 is modified (phosphotyrosine). Residues 44–313 form the Septin-type G domain; the sequence is RGFEFTLMVV…ENYRSRKLAA (270 aa). Residues 44–314 form an interaction with SEPTIN12 region; sequence RGFEFTLMVV…NYRSRKLAAV (271 aa). Positions 54–61 are G1 motif; that stretch reads GESGLGKS. A GTP-binding site is contributed by 54-61; sequence GESGLGKS. Ser-74 is modified (phosphoserine). GTP is bound by residues Thr-87, Gly-113, and 192–200; that span reads KADTLTPEE. The tract at residues 110–113 is G3 motif; that stretch reads DTPG. Positions 191–194 are G4 motif; it reads AKAD. At Thr-225 the chain carries Phosphothreonine. Residues Gly-247 and Arg-262 each coordinate GTP. A coiled-coil region spans residues 329–434; it reads TKSPLAQMEE…EKNKKKGKIF (106 aa). Ser-331 bears the Phosphoserine mark. Position 370 is an N6-acetyllysine (Lys-370). Residues 377-407 are compositionally biased toward basic and acidic residues; it reads QRRHEQMKKNLEAQHKGLEEKRRQFEDEKAN. Positions 377–434 are disordered; the sequence is QRRHEQMKKNLEAQHKGLEEKRRQFEDEKANWEAQQRILEQQNSSRTLEKNKKKGKIF. At Ser-421 the chain carries Phosphoserine. The residue at position 423 (Thr-423) is a Phosphothreonine.

It belongs to the TRAFAC class TrmE-Era-EngA-EngB-Septin-like GTPase superfamily. Septin GTPase family. As to quaternary structure, septins polymerize into heterooligomeric protein complexes that form filaments, and associate with cellular membranes, actin filaments and microtubules. GTPase activity is required for filament formation. Filaments are assembled from asymmetrical heterotrimers, composed of SEPTIN2, SEPTIN6 and SEPTIN7 that associate head-to-head to form a hexameric unit. Within the trimer, directly interacts with SEPTIN6, while interaction with SEPTIN2 seems indirect. In the absence of SEPTIN6, forms homodimers. Interacts directly with CENPE and links CENPE to septin filaments composed of SEPTIN2, SEPTIN6 and SEPTIN7. Interacts with SEPTIN5, SEPTIN8, SEPTIN9 and SEPTIN11. Component of a septin core octameric complex consisting of SEPTIN12, SEPTIN7, SEPTIN6 and SEPTIN2 or SEPTIN4 in the order 12-7-6-2-2-6-7-12 or 12-7-6-4-4-6-7-12 and located in the sperm annulus; the SEPTIN12:SEPTIN7 association is mediated by the respective GTP-binding domains.

The protein localises to the cytoplasm. The protein resides in the chromosome. It is found in the centromere. It localises to the kinetochore. Its subcellular location is the cytoskeleton. The protein localises to the spindle. The protein resides in the cleavage furrow. It is found in the midbody. It localises to the cilium axoneme. Its subcellular location is the cell projection. The protein localises to the cilium. The protein resides in the flagellum. Functionally, filament-forming cytoskeletal GTPase. Required for normal organization of the actin cytoskeleton. Required for normal progress through mitosis. Involved in cytokinesis. Required for normal association of CENPE with the kinetochore. Plays a role in ciliogenesis and collective cell movements. Forms a filamentous structure with SEPTIN12, SEPTIN6, SEPTIN2 and probably SEPTIN4 at the sperm annulus which is required for the structural integrity and motility of the sperm tail during postmeiotic differentiation. The chain is Septin-7 from Pan troglodytes (Chimpanzee).